The chain runs to 90 residues: MSAEFDERVMTVPLRDVLAESKGQRADKAMSLVRSHLAQHFNVEEDAVRLDPSINEAVWERGRSKPPSELRVRAARFEEEGEAVVEAETA.

Belongs to the eukaryotic ribosomal protein eL31 family.

The protein is Large ribosomal subunit protein eL31 of Natronomonas pharaonis (strain ATCC 35678 / DSM 2160 / CIP 103997 / JCM 8858 / NBRC 14720 / NCIMB 2260 / Gabara) (Halobacterium pharaonis).